We begin with the raw amino-acid sequence, 174 residues long: Regenerating islet-derived protein 3-gamma (174 aa).

The N-terminal stretch at 1–26 (MLPRVALTTMSWMLLSSLMLLSQVQG) is a signal peptide. Residues 27 to 37 (EDAKEDVPTSR) constitute a propeptide that is removed on maturation. 3 disulfide bridges follow: C40–C51, C68–C170, and C145–C162. In terms of domain architecture, C-type lectin spans 47-171 (YGSYCYALFS…CISELPYVCK (125 aa)). The interval 103 to 118 (WIGLHDPTLGQEPNRG) is sufficient to activate EXTL3. Residue H107 participates in Zn(2+) binding. Positions 114–116 (EPN) match the EPN motif. Residues E121 and H144 each contribute to the Zn(2+) site.

As to quaternary structure, forms a hexameric membrane-permeabilizing oligomeric pore on membrane phospholipids. The hexamer is formed by three dimers related by helical symmetry. Forms filaments, filamentation traps pore complexes and limits damage to host cells. Interacts with EXTL3. Post-translationally, proteolytic processing by trypsin removes an inhibitory N-terminal propeptide and is essential for peptidoglycan binding and antibacterial activity. In terms of tissue distribution, expressed in injured skeletal muscles and sciatic nerve (at protein level). Expressed in the pancreas. Expression increases during the acute phase of pancreatitis.

The protein localises to the secreted. It is found in the cytoplasm. Lipopolysaccharide inhibits pore-forming activity, explaining why is bactericidal for Gram-positive but not Gram-negative bacteria. Bactericidal C-type lectin which acts exclusively against Gram-positive bacteria and mediates bacterial killing by binding to surface-exposed carbohydrate moieties of peptidoglycan. Restricts bacterial colonization of the intestinal epithelial surface and consequently limits activation of adaptive immune responses by the microbiota. In terms of biological role, acts as a hormone in response to different stimuli like anti-inflammatory signals, such as IL17A, or gut microbiome. Is secreted by different cell types to activate its receptor EXTL3 and induce cell specific signaling pathways. Induced by IL17A in keratinocytes, regulates keratinocyte proliferation and differentiation after skin injury. In parallel, inhibits skin inflammation through the inhibition of inflammatory cytokines such as IL6 and TNF. Induced by IL22 in lung epithelial cells, inhibits cytokine production and regulates allergic airway inflammation. Induced in small intestine by inulin-enriched diet and Lactobacillus gasseri enriched microbiome, plays a role in the improvement of gut barrier function, the regulation of energy balance and glucose levels. Modulates microbiota composition in duodenal contents. Produced by nociceptor in response to endotoxins, prevents endotoxic death by targeting kynurenine pathway in microglia. Its function is as follows. Has bacteriostatic activity. Functionally, has bactericidal activity against L.monocytogenes and methicillin-resistant S.aureus. The protein is Regenerating islet-derived protein 3-gamma of Rattus norvegicus (Rat).